We begin with the raw amino-acid sequence, 263 residues long: Kallikrein 1-related peptidase b27 (263 aa).

The signal sequence occupies residues 1–17; it reads MRFLILFLALSLGGIDA. Positions 18 to 24 are cleaved as a propeptide — activation peptide; sequence APPVQSR. The Peptidase S1 domain occupies 25 to 260; that stretch reads IIGGFKCKKN…FTSWIKDTMA (236 aa). Cystine bridges form between C31–C175, C50–C66, C154–C221, C186–C200, and C211–C236. H65 serves as the catalytic Charge relay system. Residues N69 and N105 are each glycosylated (N-linked (GlcNAc...) asparagine). The Charge relay system role is filled by D122. Residue S215 is the Charge relay system of the active site.

It belongs to the peptidase S1 family. Kallikrein subfamily. Expressed in testis and submaxillary gland. Not expressed in heart, brain, spleen, lung, liver, muscle, kidney and ovary. In the testis, expression localized specifically to Leydig cells in the interstitial tissues.

Its activity is regulated as follows. Strongly inhibited by protease inhibitors diisopropyl fluorophosphate, phenylmethanesulfonyl fluoride and SBTI. Functionally, serine protease with chymotrypsin-like cleavage specificity. Shows activity towards casein, gelatin, IGFBP3 and fibronectin but not towards laminin or collagens I and IV. Does not hydrolyze kininogin to release Lys-bradykinin. The sequence is that of Kallikrein 1-related peptidase b27 (Klk1b27) from Mus musculus (Mouse).